Reading from the N-terminus, the 517-residue chain is MAKLLALSLSFCFLLLGGCFALREQPQQNECQLERLDALEPDNRIESEGGLIETWNPNNKQFRCAGVALSRATLQRNALRRPYYSNAPQEIFIQQGNGYFGMVFPGCPETFEEPQESEQGEGRRYRDRHQKVNRFREGDIIAVPTGIVFWMYNDQDTPVIAVSLTDIRSSNNQLDQMPRRFYLAGNHEQEFLQYQHQQGGKQEQENEGNNIFSGFKRDYLEDAFNVNRHIVDRLQGRNEDEEKGAIVKVKGGLSIISPPEKQARHQRGSRQEEDEDEEKQPRHQRGSRQEEEEDEDEERQPRHQRRRGEEEEEDKKERGGSQKGKSRRQGDNGLEETVCTAKLRLNIGPSSSPDIYNPEAGRIKTVTSLDLPVLRWLKLSAEHGSLHKNAMFVPHYNLNANSIIYALKGRARLQVVNCNGNTVFDGELEAGRALTVPQNYAVAAKSLSDRFSYVAFKTNDRAGIARLAGTSSVINNLPLDVVAATFNLQRNEARQLKSNNPFKFLVPARESENRASA.

The first 21 residues, 1–21 (MAKLLALSLSFCFLLLGGCFA), serve as a signal peptide directing secretion. 2 cysteine pairs are disulfide-bonded: Cys31/Cys64 and Cys107/Cys339. The Cupin type-1 1 domain maps to 36 to 232 (LDALEPDNRI…AFNVNRHIVD (197 aa)). The tract at residues 249–335 (VKGGLSIISP…SRRQGDNGLE (87 aa)) is disordered. One can recognise a Cupin type-1 2 domain in the interval 345 to 494 (LNIGPSSSPD…TFNLQRNEAR (150 aa)).

It belongs to the 11S seed storage protein (globulins) family. As to quaternary structure, hexamer; each subunit is composed of an acidic and a basic chain derived from a single precursor and linked by a disulfide bond.

This protein found in the seeds of many leguminous and non-leguminous plants is the source of sulfur-containing amino acids in seed meals. The chain is Legumin A (LEGA) from Pisum sativum (Garden pea).